Consider the following 907-residue polypeptide: Coatomer subunit beta'-1 (907 aa).

WD repeat units follow at residues 13–52, 55–94, 97–136, 140–180, 183–224, 227–266, 269–309, 351–389, and 461–501; these read QRSE…MVKS, VSEL…KVKV, AHTD…MCTQ, GHSH…PNFT, GHQK…CVQT, GHTH…LENT, YGLE…ASMD, SCDL…NRSF, and RIDV…SYLE. Acidic residues-rich tracts occupy residues 850 to 866 and 874 to 887; these read ETED…EEVL and STDE…DEPE. Residues 850-887 form a disordered region; that stretch reads ETEDALDENGEPDEEVLEENKVEESTDEAVEVDADEPE.

The protein belongs to the WD repeat COPB2 family. In terms of assembly, oligomeric complex that consists of at least the alpha, beta, beta', gamma, delta, epsilon and zeta subunits.

It localises to the cytoplasm. The protein localises to the golgi apparatus membrane. It is found in the cytoplasmic vesicle. Its subcellular location is the COPI-coated vesicle membrane. Functionally, the coatomer is a cytosolic protein complex that binds to dilysine motifs and reversibly associates with Golgi non-clathrin-coated vesicles, which further mediate biosynthetic protein transport from the ER, via the Golgi up to the trans Golgi network. Coatomer complex is required for budding from Golgi membranes, and is essential for the retrograde Golgi-to-ER transport of dilysine-tagged proteins. This Oryza sativa subsp. japonica (Rice) protein is Coatomer subunit beta'-1.